Here is a 689-residue protein sequence, read N- to C-terminus: Chloride channel protein ClC-Kb (689 aa).

Over 1-51 (MSRVLVIEQREGEEKTLIQKHIFRPFPNTRRVVIDHLQRLKNFLFRIGDDW) the chain is Cytoplasmic. 2 consecutive transmembrane segments (helical) span residues 52–83 (YFLF…RWLQ) and 92–112 (LRYL…TGFA). The segment at residues 117 to 128 (PHSGGSGIPELK) is an intramembrane region (helical). Chloride is bound at residue Ser-122. A run of 2 helical transmembrane segments spans residues 142 to 161 (IKNF…AGST) and 162 to 181 (MFLG…AAYL). N-linked (GlcNAc...) asparagine glycosylation is present at Asn-194. The segment at residues 204-225 (AAAAVGVSTVFGAPISGVLFSV) is an intramembrane region (helical). Residues 237–256 (YWRGFFAATCGAFVFRLLAV) form a helical membrane-spanning segment. Ca(2+)-binding residues include Glu-260, Glu-262, Asp-279, and Glu-282. 2 consecutive transmembrane segments (helical) span residues 283-311 (MFFF…LGYV) and 326-343 (PMYS…TFPE). Residues 350 to 361 (ASRLTMKELLTS) constitute an intramembrane region (helical). The next 2 helical transmembrane spans lie at 402-422 (GTLA…TTLP) and 423-442 (MPAG…GRLV). Phe-428 contributes to the chloride binding site. Positions 466 to 498 (GGYAWQGAPAYSGAVTHSVSTALLAFEATGQIA) form an intramembrane region, helical. A helical transmembrane segment spans residues 502–522 (PVILCVLIANAFTQKLQPSFY). Residues 523-689 (DGTIIVKKLP…KAIEDLANPK (167 aa)) lie on the Cytoplasmic side of the membrane. CBS domains follow at residues 553 to 613 (MNPD…SHER) and 630 to 689 (ACSI…ANPK).

This sequence belongs to the chloride channel (TC 2.A.49) family. In terms of processing, N-glycosylated on a single asparagine, probably Asn-365 or Asn-375. In terms of tissue distribution, expressed in two distinct regions of the kidney; the proximal convoluted tubule and the diluting segment.

The protein localises to the cell membrane. Its function is as follows. Voltage-gated chloride channel. Chloride channels have several functions including the regulation of cell volume, the stabilization of membrane potential, signal transduction and transepithelial transport. The chain is Chloride channel protein ClC-Kb (clcnkb) from Xenopus laevis (African clawed frog).